We begin with the raw amino-acid sequence, 302 residues long: Aspartate carbamoyltransferase catalytic subunit (302 aa).

Residues Arg-49 and Thr-50 each coordinate carbamoyl phosphate. An L-aspartate-binding site is contributed by Lys-77. Positions 99, 126, and 129 each coordinate carbamoyl phosphate. L-aspartate is bound by residues Arg-159 and Arg-209. Positions 250 and 251 each coordinate carbamoyl phosphate.

It belongs to the aspartate/ornithine carbamoyltransferase superfamily. ATCase family. In terms of assembly, heterododecamer (2C3:3R2) of six catalytic PyrB chains organized as two trimers (C3), and six regulatory PyrI chains organized as three dimers (R2).

It carries out the reaction carbamoyl phosphate + L-aspartate = N-carbamoyl-L-aspartate + phosphate + H(+). It participates in pyrimidine metabolism; UMP biosynthesis via de novo pathway; (S)-dihydroorotate from bicarbonate: step 2/3. In terms of biological role, catalyzes the condensation of carbamoyl phosphate and aspartate to form carbamoyl aspartate and inorganic phosphate, the committed step in the de novo pyrimidine nucleotide biosynthesis pathway. This chain is Aspartate carbamoyltransferase catalytic subunit, found in Staphylococcus carnosus (strain TM300).